The primary structure comprises 438 residues: Serine--tRNA ligase (438 aa).

245–247 (TAE) is a binding site for L-serine. Residue 276–278 (RSE) participates in ATP binding. Glu299 contributes to the L-serine binding site. Position 363–366 (363–366 (EISS)) interacts with ATP. Ser398 contacts L-serine.

This sequence belongs to the class-II aminoacyl-tRNA synthetase family. Type-1 seryl-tRNA synthetase subfamily. As to quaternary structure, homodimer. The tRNA molecule binds across the dimer.

The protein resides in the cytoplasm. It carries out the reaction tRNA(Ser) + L-serine + ATP = L-seryl-tRNA(Ser) + AMP + diphosphate + H(+). The catalysed reaction is tRNA(Sec) + L-serine + ATP = L-seryl-tRNA(Sec) + AMP + diphosphate + H(+). Its pathway is aminoacyl-tRNA biosynthesis; selenocysteinyl-tRNA(Sec) biosynthesis; L-seryl-tRNA(Sec) from L-serine and tRNA(Sec): step 1/1. Its function is as follows. Catalyzes the attachment of serine to tRNA(Ser). Is also able to aminoacylate tRNA(Sec) with serine, to form the misacylated tRNA L-seryl-tRNA(Sec), which will be further converted into selenocysteinyl-tRNA(Sec). In Delftia acidovorans (strain DSM 14801 / SPH-1), this protein is Serine--tRNA ligase.